The primary structure comprises 388 residues: FMRFamide neuropeptides (388 aa).

An N-terminal signal peptide occupies residues Met-1–Ala-21. Residues Tyr-22 to Arg-172 constitute a propeptide that is removed on maturation. Residues Phe-40–Leu-74 are disordered. Over residues Leu-64–Leu-74 the composition is skewed to polar residues. Phenylalanine amide occurs at positions 179, 196, 208, 219, 230, 241, 253, 265, 277, 289, 301, 313, 325, 337, 346, 359, and 372. The interval Gly-360–Lys-388 is disordered. Positions Lys-374–Lys-388 are enriched in basic and acidic residues. Positions Ser-375–Lys-388 are excised as a propeptide.

It belongs to the FARP (FMRFamide related peptide) family. In the brain, expressed in 2 large cells in the lateral neurons in each optic lobe, 2 slightly bigger cells on both sides of the tritocerebrum, around 14 small cells in the dorsal area, around 13 cells in the subesophageal ganglion, and in the central brain.

The protein localises to the secreted. The sequence is that of FMRFamide neuropeptides from Musca domestica (House fly).